We begin with the raw amino-acid sequence, 543 residues long: Chaperonin GroEL (543 aa).

Residues 30–33 (TLGP), K51, 87–91 (DGTTT), G415, 479–481 (NAA), and D495 each bind ATP.

It belongs to the chaperonin (HSP60) family. In terms of assembly, forms a cylinder of 14 subunits composed of two heptameric rings stacked back-to-back. Interacts with the co-chaperonin GroES.

The protein resides in the cytoplasm. The enzyme catalyses ATP + H2O + a folded polypeptide = ADP + phosphate + an unfolded polypeptide.. Together with its co-chaperonin GroES, plays an essential role in assisting protein folding. The GroEL-GroES system forms a nano-cage that allows encapsulation of the non-native substrate proteins and provides a physical environment optimized to promote and accelerate protein folding. This chain is Chaperonin GroEL, found in Francisella philomiragia subsp. philomiragia (strain ATCC 25017 / CCUG 19701 / FSC 153 / O#319-036).